The chain runs to 398 residues: Sex hormone-binding globulin (398 aa).

Residues 1 to 31 (MATPPLVPLLLLLLLLLPHAHHRLALRSVLA) form the signal peptide. Laminin G-like domains are found at residues 41–213 (VHLI…RRSC) and 220–386 (GIFF…THSC). 2 disulfide bridges follow: Cys-189-Cys-213 and Cys-358-Cys-386. N-linked (GlcNAc...) asparagine glycosylation is found at Asn-376 and Asn-392.

Homodimer.

The protein resides in the secreted. Functionally, functions as an androgen transport protein, but may also be involved in receptor mediated processes. Each dimer binds one molecule of steroid. Specific for 5-alpha-dihydrotestosterone, testosterone, and 17-beta-estradiol. Regulates the plasma metabolic clearance rate of steroid hormones by controlling their plasma concentration. This is Sex hormone-binding globulin (SHBG) from Oryctolagus cuniculus (Rabbit).